The following is a 1186-amino-acid chain: ATP-dependent helicase/deoxyribonuclease subunit B (1186 aa).

Residues 1–308 (MSVKFLLGRA…AHLEKEWGKN (308 aa)) enclose the UvrD-like helicase ATP-binding domain. 8–15 (GRAGSGKT) is a binding site for ATP. Residues 288-620 (SLPRFKDNPA…LVGTADRSRY (333 aa)) form the UvrD-like helicase C-terminal domain. [4Fe-4S] cluster contacts are provided by Cys822, Cys1144, Cys1147, and Cys1153.

Belongs to the helicase family. AddB/RexB type 1 subfamily. In terms of assembly, heterodimer of AddA and AddB. Mg(2+) serves as cofactor. The cofactor is [4Fe-4S] cluster.

In terms of biological role, the heterodimer acts as both an ATP-dependent DNA helicase and an ATP-dependent, dual-direction single-stranded exonuclease. Recognizes the chi site generating a DNA molecule suitable for the initiation of homologous recombination. The AddB subunit has 5' -&gt; 3' nuclease activity but not helicase activity. This Natranaerobius thermophilus (strain ATCC BAA-1301 / DSM 18059 / JW/NM-WN-LF) protein is ATP-dependent helicase/deoxyribonuclease subunit B.